We begin with the raw amino-acid sequence, 738 residues long: Outer membrane protein assembly factor BamA (738 aa).

Residues 1–13 (MVWLLFLSSFCFA) form the signal peptide. 5 consecutive POTRA domains span residues 14–81 (DEVV…LQEN), 82–159 (PILR…VKEA), 162–248 (TVIR…LKEG), 251–329 (YSFG…VVST), and 332–404 (YRIR…VKER).

The protein belongs to the BamA family. Part of the Bam complex.

The protein resides in the cell outer membrane. Part of the outer membrane protein assembly complex, which is involved in assembly and insertion of beta-barrel proteins into the outer membrane. This Neorickettsia risticii (strain Illinois) protein is Outer membrane protein assembly factor BamA.